The chain runs to 177 residues: MGGQKIVLLSIFVCFYVFSLVSCTEFEAGGENGWIIPQSSNQSDIFNQWASKNRFKVGDTIRFKYKKDSVLVVTEDEYKKCQTTKPELYSNHDDTVFKLDRPGLFYFISGVSGHCEQGQKMIIKVMEVESTPQSPPPSSSLPASAHKKNHAVRKTSRFLGAGLVTISILVITVFSLV.

The signal sequence occupies residues 1–23 (MGGQKIVLLSIFVCFYVFSLVSC). A Phytocyanin domain is found at 24-127 (TEFEAGGENG…GQKMIIKVME (104 aa)). Asparagine 41 carries an N-linked (GlcNAc...) asparagine glycan. Cysteine 81 and cysteine 115 are disulfide-bonded. Asparagine 149 carries GPI-anchor amidated asparagine lipidation. The propeptide at 150-177 (HAVRKTSRFLGAGLVTISILVITVFSLV) is removed in mature form.

It belongs to the early nodulin-like (ENODL) family. In terms of tissue distribution, confined to flowers.

The protein localises to the cell membrane. Its function is as follows. May act as a carbohydrate transporter. The protein is Early nodulin-like protein 6 of Arabidopsis thaliana (Mouse-ear cress).